Reading from the N-terminus, the 293-residue chain is Glutamyl-Q tRNA(Asp) synthetase (293 aa).

L-glutamate-binding positions include 8–12 (RFAPT) and glutamate 44. The 'HIGH' region motif lies at 11–21 (PTPSGYLHFGS). 4 residues coordinate Zn(2+): cysteine 100, cysteine 102, tyrosine 114, and cysteine 118. Residues tyrosine 171 and arginine 189 each contribute to the L-glutamate site. A 'KMSKS' region motif is present at residues 227–231 (KLGKS). Lysine 230 lines the ATP pocket.

Belongs to the class-I aminoacyl-tRNA synthetase family. GluQ subfamily. It depends on Zn(2+) as a cofactor.

Functionally, catalyzes the tRNA-independent activation of glutamate in presence of ATP and the subsequent transfer of glutamate onto a tRNA(Asp). Glutamate is transferred on the 2-amino-5-(4,5-dihydroxy-2-cyclopenten-1-yl) moiety of the queuosine in the wobble position of the QUC anticodon. This is Glutamyl-Q tRNA(Asp) synthetase from Pseudomonas paraeruginosa (strain DSM 24068 / PA7) (Pseudomonas aeruginosa (strain PA7)).